Consider the following 400-residue polypeptide: Probable splicing factor YJU2B (400 aa).

The interval 1–26 (MGERKGVNKYYPPDFNPEKHGSLNRY) is disordered. Ser-40 is subject to Phosphoserine. Positions 182-214 (LNSMLRKRFREKKKAMQEEEERDQALQAKASLA) form a coiled coil. Residues 255–400 (WFPSTPGASA…VADYSGSESE (146 aa)) are disordered. The segment covering 283–292 (RRATPTSSPV) has biased composition (polar residues). Ser-310 carries the phosphoserine modification. Positions 327 to 341 (EGTNQNRPVSPQDCS) are enriched in polar residues. Residues 364 to 380 (PQPPPDTSPEAPNPQDT) are compositionally biased toward pro residues.

Belongs to the CWC16 family.

It is found in the nucleus. Functionally, may be involved in mRNA splicing. The sequence is that of Probable splicing factor YJU2B (YJU2B) from Bos taurus (Bovine).